Consider the following 316-residue polypeptide: Bifunctional peptidase and (3S)-lysyl hydroxylase JMJD7 (316 aa).

The 180-residue stretch at 128–307 (VQKQCSNLPS…LKYSYFQLLD (180 aa)) folds into the JmjC domain. Fe cation is bound by residues histidine 178, aspartate 180, and histidine 277.

As to quaternary structure, homodimer; disulfide-linked. Interacts with DRG1 and DRG2. The cofactor is Fe(2+).

Its subcellular location is the nucleus. It is found in the cytoplasm. The catalysed reaction is L-lysyl-[protein] + 2-oxoglutarate + O2 = (3S)-3-hydroxy-L-lysyl-[protein] + succinate + CO2. In terms of biological role, bifunctional enzyme that acts both as an endopeptidase and 2-oxoglutarate-dependent monooxygenase. Endopeptidase that cleaves histones N-terminal tails at the carboxyl side of methylated arginine or lysine residues, to generate 'tailless nucleosomes', which may trigger transcription elongation. Preferentially recognizes and cleaves monomethylated and dimethylated arginine residues of histones H2, H3 and H4. After initial cleavage, continues to digest histones tails via its aminopeptidase activity. Additionally, may play a role in protein biosynthesis by modifying the translation machinery. Acts as a Fe(2+) and 2-oxoglutarate-dependent monooxygenase, catalyzing (S)-stereospecific hydroxylation at C-3 of 'Lys-22' of DRG1 and 'Lys-21' of DRG2 translation factors (TRAFAC), promoting their interaction with ribonucleic acids (RNA). The chain is Bifunctional peptidase and (3S)-lysyl hydroxylase JMJD7 from Homo sapiens (Human).